Reading from the N-terminus, the 249-residue chain is Ubiquinone biosynthesis O-methyltransferase (249 aa).

4 residues coordinate S-adenosyl-L-methionine: arginine 41, glycine 72, aspartate 93, and methionine 136.

Belongs to the methyltransferase superfamily. UbiG/COQ3 family.

The enzyme catalyses a 3-demethylubiquinol + S-adenosyl-L-methionine = a ubiquinol + S-adenosyl-L-homocysteine + H(+). It catalyses the reaction a 3-(all-trans-polyprenyl)benzene-1,2-diol + S-adenosyl-L-methionine = a 2-methoxy-6-(all-trans-polyprenyl)phenol + S-adenosyl-L-homocysteine + H(+). It functions in the pathway cofactor biosynthesis; ubiquinone biosynthesis. In terms of biological role, O-methyltransferase that catalyzes the 2 O-methylation steps in the ubiquinone biosynthetic pathway. In Methylobacterium nodulans (strain LMG 21967 / CNCM I-2342 / ORS 2060), this protein is Ubiquinone biosynthesis O-methyltransferase.